Reading from the N-terminus, the 476-residue chain is Exodeoxyribonuclease 7 large subunit (476 aa).

This sequence belongs to the XseA family. Heterooligomer composed of large and small subunits.

The protein localises to the cytoplasm. The enzyme catalyses Exonucleolytic cleavage in either 5'- to 3'- or 3'- to 5'-direction to yield nucleoside 5'-phosphates.. In terms of biological role, bidirectionally degrades single-stranded DNA into large acid-insoluble oligonucleotides, which are then degraded further into small acid-soluble oligonucleotides. The polypeptide is Exodeoxyribonuclease 7 large subunit (Bartonella bacilliformis (strain ATCC 35685 / KC583 / Herrer 020/F12,63)).